A 187-amino-acid polypeptide reads, in one-letter code: Protein GrpE (187 aa).

A compositionally biased stretch (basic and acidic residues) spans 1-11 (MTDSSNEHETE). Positions 1-21 (MTDSSNEHETENPSLPIPDNE) are disordered.

The protein belongs to the GrpE family. As to quaternary structure, homodimer.

The protein localises to the cytoplasm. In terms of biological role, participates actively in the response to hyperosmotic and heat shock by preventing the aggregation of stress-denatured proteins, in association with DnaK and GrpE. It is the nucleotide exchange factor for DnaK and may function as a thermosensor. Unfolded proteins bind initially to DnaJ; upon interaction with the DnaJ-bound protein, DnaK hydrolyzes its bound ATP, resulting in the formation of a stable complex. GrpE releases ADP from DnaK; ATP binding to DnaK triggers the release of the substrate protein, thus completing the reaction cycle. Several rounds of ATP-dependent interactions between DnaJ, DnaK and GrpE are required for fully efficient folding. The sequence is that of Protein GrpE from Chlamydia caviae (strain ATCC VR-813 / DSM 19441 / 03DC25 / GPIC) (Chlamydophila caviae).